Here is a 242-residue protein sequence, read N- to C-terminus: Probable ergothioneine transport ATP-binding protein EgtUA (242 aa).

Residues Ile2–Phe236 enclose the ABC transporter domain. Residue Gly34–Thr41 coordinates ATP.

Belongs to the ABC transporter superfamily. As to quaternary structure, the complex is probably composed of at least an ATP-binding protein (EgtUA) and a transmembrane protein (EgtUBC).

It is found in the cell inner membrane. The catalysed reaction is ergothioneine(out) + ATP + H2O = ergothioneine(in) + ADP + phosphate + H(+). In terms of biological role, part of an ABC transporter complex EgtU required for the uptake of ergothioneine (EGT), a natural low-molecular weight (LMW) thiol antioxidant. Probably responsible for energy coupling to the transport system. In Streptococcus pneumoniae serotype 2 (strain D39 / NCTC 7466), this protein is Probable ergothioneine transport ATP-binding protein EgtUA.